The sequence spans 1489 residues: FERM domain-containing protein C (1489 aa).

Composition is skewed to polar residues over residues 59–79 (DTES…NFNS) and 103–118 (NSPL…STSI). 4 disordered regions span residues 59–86 (DTES…HQHL), 103–197 (NSPL…PSTL), 252–271 (NSVQ…NNNN), and 277–312 (EQQQ…TPDS). The segment covering 131 to 153 (SSSSSSSDGDSNSSSDSSDNSSE) has biased composition (low complexity). Basic residues predominate over residues 163 to 172 (HLHLHRHHRK). Residues 181–195 (FESSSESSEQYGSPS) are compositionally biased toward low complexity. Positions 202-289 (ALKLEKIMQI…QEKQQQQQQH (88 aa)) form a coiled coil. Low complexity predominate over residues 277–287 (EQQQEKQQQQQ). Residues 303–312 (RSVSISTPDS) are compositionally biased toward polar residues. A coiled-coil region spans residues 356–383 (IKVSKVLEEEMQLQQEFEKQEQLRHSAR). 3 disordered regions span residues 396-435 (NLQD…ENQN), 459-479 (VITP…KILT), and 508-569 (EDPL…TTTT). Positions 421–435 (ENVSNDNSSDNENQN) are enriched in low complexity. Positions 545 to 555 (TASSSSSPTLQ) are enriched in polar residues. Residues 556–569 (ATKTTTTTTTTTTT) are compositionally biased toward low complexity. One can recognise an FERM domain in the interval 637–934 (ILVHISLVDQ…GYKYFIQHDE (298 aa)). 13 LRR repeats span residues 1017-1040 (KVEL…LKDT), 1053-1075 (ENLN…AFEP), 1087-1110 (HLNL…IEKY), 1111-1133 (PNIE…VILR), 1167-1191 (NKTI…IFEG), 1196-1219 (SLSL…KFIK), 1254-1278 (SCHI…VIKG), 1282-1306 (NQTI…LCQS), 1339-1362 (NKTI…AIGT), 1367-1391 (NETL…ILNG), 1395-1418 (NSTI…SLAN), 1428-1450 (VITL…QLST), and 1451-1474 (NIPI…IKNA).

In Dictyostelium discoideum (Social amoeba), this protein is FERM domain-containing protein C (frmC).